Reading from the N-terminus, the 137-residue chain is Large ribosomal subunit protein uL16c (137 aa).

Belongs to the universal ribosomal protein uL16 family. In terms of assembly, part of the 50S ribosomal subunit.

It is found in the plastid. The protein resides in the chloroplast. In Trieres chinensis (Marine centric diatom), this protein is Large ribosomal subunit protein uL16c.